The primary structure comprises 694 residues: U-box domain-containing protein 1 (694 aa).

Residues 292–366 enclose the U-box domain; sequence NIPDEFRCPI…HQWCYENNVK (75 aa). ARM repeat units lie at residues 392–432, 435–474, 476–516, 519–558, 560–599, 601–641, and 646–685; these read SENK…LLAK, MDNR…NLSI, DNNK…SLSM, DCKV…NLAV, NPNK…VLLG, SEGL…GLCK, and LVAM…LLNR.

Interacts with LYK3. Binds to NORK/DMI2. Post-translationally, phosphorylated by LYK3 in vitro. Phosphorylated by NORK/DMI2. As to expression, present ubiquitously at very low levels during nonsymbiotic growth. Accumulates in roots and nodules during symbiotic growth with rhizobia and mycorrhiza.

The protein localises to the cell membrane. The enzyme catalyses S-ubiquitinyl-[E2 ubiquitin-conjugating enzyme]-L-cysteine + [acceptor protein]-L-lysine = [E2 ubiquitin-conjugating enzyme]-L-cysteine + N(6)-ubiquitinyl-[acceptor protein]-L-lysine.. Its pathway is protein modification; protein ubiquitination. In terms of biological role, exhibits U-box-dependent E3 ubiquitin ligase activity in vitro. Negatively modulates successive stages of infection and development of rhizobial (e.g. Sinorhizobium meliloti) and arbuscular mycorrhizal fungi (AM, e.g. Rhizophagus irregularis) symbioses, in an ubiquitin ligase activity-dependent manner. Negative regulator of the LYK3 signaling pathway leading to nitrogen-fixing symbiosis (e.g. infection and nodulation) by rhizobia. May be involved in the discrimination of rhizobium strains producing variant Nod factors. In Medicago truncatula (Barrel medic), this protein is U-box domain-containing protein 1.